Reading from the N-terminus, the 120-residue chain is uncharacterized protein (120 aa).

3 helical membrane passes run 24 to 44 (ALLG…ALCY), 61 to 81 (IGVV…NLAV), and 86 to 106 (PLGK…GIVV).

To M.leprae ML1176.

It is found in the cell membrane. This is an uncharacterized protein from Mycobacterium bovis (strain ATCC BAA-935 / AF2122/97).